The primary structure comprises 449 residues: Cyclin-B1-1 (449 aa).

2 disordered regions span residues 1–34 (MATRSQNVAAAPQPPQNRGNVAALGKQKAVVAGR) and 90–143 (AVAP…SVRK). 2 stretches are compositionally biased toward low complexity: residues 90-102 (AVAPAAVARPAQR) and 121-134 (EISSDSDQSMRQQS).

The protein belongs to the cyclin family. Cyclin AB subfamily.

The sequence is that of Cyclin-B1-1 (CYCB1-1) from Oryza sativa subsp. japonica (Rice).